Consider the following 205-residue polypeptide: MSKRESSKYKIDRRMGENIWGRPKSPVNRREYGPGQHGQRRKGKLSDFGVQLRAKQKLKGYYGDLREKQFRAIFAEADRRKGDTSENLIGLLESRLDAIVYRAKFVPTVFAARQFVNHGHVSVNGVRVNIGSYRCKAGDVIEVREKSKQLVIVLEAVSLAERDVPDYIEVDHNKMVATFGRVPTLSDVPFPVVMEPHLVVEFYSR.

Positions 1–16 are enriched in basic and acidic residues; sequence MSKRESSKYKIDRRMG. Residues 1–46 form a disordered region; sequence MSKRESSKYKIDRRMGENIWGRPKSPVNRREYGPGQHGQRRKGKLS. The S4 RNA-binding domain occupies 94-157; sequence SRLDAIVYRA…KQLVIVLEAV (64 aa).

The protein belongs to the universal ribosomal protein uS4 family. As to quaternary structure, part of the 30S ribosomal subunit. Contacts protein S5. The interaction surface between S4 and S5 is involved in control of translational fidelity.

Its function is as follows. One of the primary rRNA binding proteins, it binds directly to 16S rRNA where it nucleates assembly of the body of the 30S subunit. In terms of biological role, with S5 and S12 plays an important role in translational accuracy. This is Small ribosomal subunit protein uS4 from Rhizobium johnstonii (strain DSM 114642 / LMG 32736 / 3841) (Rhizobium leguminosarum bv. viciae).